Reading from the N-terminus, the 168-residue chain is uncharacterized protein (168 aa).

This is an uncharacterized protein from Escherichia coli (strain K12).